We begin with the raw amino-acid sequence, 55 residues long: Mannose/glucose-specific lectin alpha chain (55 aa).

This sequence belongs to the leguminous lectin family. Tetramer of two alpha and two beta chains.

The protein is Mannose/glucose-specific lectin alpha chain of Lathyrus sativus (White vetchling).